We begin with the raw amino-acid sequence, 561 residues long: Excitatory amino acid transporter 4 (561 aa).

At 1–52 the chain is on the cytoplasmic side; it reads MSSHGNSLFLRESGAGGGCLQGLQDSLQQRALRTRLRLQTMTREHVRRFLRR. Ser2 is subject to Phosphoserine. The next 3 membrane-spanning stretches (helical) occupy residues 53 to 73, 96 to 116, and 130 to 150; these read NAFI…AFAL, MLQM…MASL, and VYYM…VTII. Asn213, Asn229, and Asn236 each carry an N-linked (GlcNAc...) asparagine glycan. 3 helical membrane-spanning segments follow: residues 259 to 282, 292 to 319, and 341 to 362; these read SANG…IGGM, FFDS…LFLI, and LTVI…YFLV. The discontinuously helical intramembrane region spans 368–398; it reads FPFIGGMLQALITAMGTSSSSATLPITFRCL. 385–387 contacts L-aspartate; sequence SSS. The helical transmembrane segment at 408–434 threads the bilayer; it reads ITRFVLPVGATVNMDGTALYEALAAIF. Residues Gly416, Thr418, and Asn420 each coordinate Na(+). L-aspartate-binding positions include Thr424, 465–469, Asp498, and Asn505; that span reads IPQAG. Residues 448 to 481 constitute an intramembrane region (discontinuously helical); sequence ITTISITATAASVGAAGIPQAGLVTMVIVLTSVG. A helical membrane pass occupies residues 495-516; that stretch reads WFLDRLRTMTNVLGDSIGAAVI. Na(+) is bound by residues Asn505 and Asp509.

This sequence belongs to the dicarboxylate/amino acid:cation symporter (DAACS) (TC 2.A.23) family. SLC1A6 subfamily. Homotrimer. As to expression, brain specific.

The protein localises to the cell membrane. It carries out the reaction K(+)(in) + L-glutamate(out) + 3 Na(+)(out) + H(+)(out) = K(+)(out) + L-glutamate(in) + 3 Na(+)(in) + H(+)(in). The catalysed reaction is K(+)(in) + L-aspartate(out) + 3 Na(+)(out) + H(+)(out) = K(+)(out) + L-aspartate(in) + 3 Na(+)(in) + H(+)(in). It catalyses the reaction D-aspartate(out) + K(+)(in) + 3 Na(+)(out) + H(+)(out) = D-aspartate(in) + K(+)(out) + 3 Na(+)(in) + H(+)(in). Sodium-dependent, high-affinity amino acid transporter that mediates the uptake of L-glutamate and also L-aspartate and D-aspartate. Functions as a symporter that transports one amino acid molecule together with two or three Na(+) ions and one proton, in parallel with the counter-transport of one K(+) ion. Mediates Cl(-) flux that is not coupled to amino acid transport; this avoids the accumulation of negative charges due to aspartate and Na(+) symport. Plays a redundant role in the rapid removal of released glutamate from the synaptic cleft, which is essential for terminating the postsynaptic action of glutamate. In Mus musculus (Mouse), this protein is Excitatory amino acid transporter 4 (Slc1a6).